The primary structure comprises 356 residues: MEERTVTLEIPEVLKRQLEDDCYYINRRKRLVQLPCHTNIITILESYVKHFAISAAFSANERPRHHHAMPHASMNVPYIPAEKNIDLCKEMVDGLRITFDYTLPLVLLYPYEQAQYKKVTASKVFLAIKESATNTNRSQEKLSPSLRLLNPSRPQSTESQSTSGEPATPKRRKAEPQAVQSLRRSSPHTANCDRLSKSSTSPQPKRWQQDMSTSVPKLFLHLEKKTPVHSRSSSPTLTPSQEGSPVFAGFEGRRTNEINEVLSWKLVPDNYPPGDQPPPPSYIYGAQHLLRLFVKLPEILGKMSFTEKNLKALLKHFDLFVRFLAEYHDDFFPESAYVAASEVHYSTRNPQAVNKC.

The 349-residue stretch at 2-350 folds into the MRG domain; sequence EERTVTLEIP…SEVHYSTRNP (349 aa). 2 disordered regions span residues 135–210 and 225–247; these read TNRS…WQQD and KTPV…SPVF. Low complexity predominate over residues 142 to 156; that stretch reads LSPSLRLLNPSRPQS. 2 stretches are compositionally biased toward polar residues: residues 178 to 189 and 229 to 243; these read AVQSLRRSSPHT and HSRS…SQEG.

The protein resides in the nucleus. Probable non-catalytic component of the MSL histone acetyltransferase complex, a multiprotein complex that mediates the majority of histone H4 acetylation at 'Lys-16' (H4K16ac), an epigenetic mark that prevents chromatin compaction. This Homo sapiens (Human) protein is MSL complex subunit 3B.